The sequence spans 271 residues: Cytosolic Fe-S cluster assembly factor NUBP2 (271 aa).

Methionine 1 is modified (N-acetylmethionine). Residue 22–29 (GKGGVGKS) coordinates ATP. The [4Fe-4S] cluster site is built by cysteine 196 and cysteine 199.

It belongs to the Mrp/NBP35 ATP-binding proteins family. NUBP2/CFD1 subfamily. Heterotetramer of 2 NUBP1 and 2 NUBP2 chains. Interacts with KIFC1. Interacts with NUBP1. [4Fe-4S] cluster serves as cofactor. In terms of tissue distribution, widely expressed with highest expression in skeletal muscle.

It localises to the nucleus. It is found in the cytoplasm. The protein localises to the cytoskeleton. The protein resides in the microtubule organizing center. Its subcellular location is the centrosome. It localises to the cilium axoneme. It is found in the centriole. Functionally, component of the cytosolic iron-sulfur (Fe/S) protein assembly (CIA) machinery. Required for maturation of extramitochondrial Fe-S proteins. The NUBP1-NUBP2 heterotetramer forms a Fe-S scaffold complex, mediating the de novo assembly of an Fe-S cluster and its transfer to target apoproteins. Negatively regulates cilium formation and structure. The chain is Cytosolic Fe-S cluster assembly factor NUBP2 from Homo sapiens (Human).